Consider the following 359-residue polypeptide: Protein RecA (359 aa).

An ATP-binding site is contributed by 74 to 81 (GPESSGKT).

Belongs to the RecA family.

Its subcellular location is the cytoplasm. Can catalyze the hydrolysis of ATP in the presence of single-stranded DNA, the ATP-dependent uptake of single-stranded DNA by duplex DNA, and the ATP-dependent hybridization of homologous single-stranded DNAs. It interacts with LexA causing its activation and leading to its autocatalytic cleavage. This Anaplasma marginale (strain St. Maries) protein is Protein RecA.